Consider the following 384-residue polypeptide: Putative odorant receptor 98b (384 aa).

Residues Met1–Arg34 lie on the Cytoplasmic side of the membrane. Residues Ser35–Gln55 form a helical membrane-spanning segment. Residues Asn56–Ser66 are Extracellular-facing. The chain crosses the membrane as a helical span at residues Leu67–Tyr87. The Cytoplasmic portion of the chain corresponds to Lys88–Tyr128. A helical transmembrane segment spans residues Ala129–Ile149. At Ser150–Tyr177 the chain is on the extracellular side. Residues Ile178–Val198 form a helical membrane-spanning segment. The Cytoplasmic portion of the chain corresponds to Asp199–Pro258. The helical transmembrane segment at Leu259–Ala279 threads the bilayer. The Extracellular portion of the chain corresponds to Asn280–Pro284. A helical membrane pass occupies residues Ala285–Phe305. The Cytoplasmic segment spans residues Cys306–Leu329. The chain crosses the membrane as a helical span at residues Leu330 to Gly350. The Extracellular segment spans residues Cys351 to Asp384.

The protein belongs to the insect chemoreceptor superfamily. Heteromeric odorant receptor channel (TC 1.A.69) family. Or1a subfamily. In terms of assembly, interacts with Orco. Complexes exist early in the endomembrane system in olfactory sensory neurons (OSNs), coupling these complexes to the conserved ciliary trafficking pathway.

The protein localises to the cell membrane. Its function is as follows. Odorant receptor which mediates acceptance or avoidance behavior, depending on its substrates. The odorant receptor repertoire encodes a large collection of odor stimuli that vary widely in identity, intensity, and duration. May form a complex with Orco to form odorant-sensing units, providing sensitive and prolonged odorant signaling and calcium permeability. The polypeptide is Putative odorant receptor 98b (Or98b) (Drosophila melanogaster (Fruit fly)).